The chain runs to 125 residues: Ribosome-binding factor A (125 aa).

Belongs to the RbfA family. As to quaternary structure, monomer. Binds 30S ribosomal subunits, but not 50S ribosomal subunits or 70S ribosomes.

The protein localises to the cytoplasm. Its function is as follows. One of several proteins that assist in the late maturation steps of the functional core of the 30S ribosomal subunit. Associates with free 30S ribosomal subunits (but not with 30S subunits that are part of 70S ribosomes or polysomes). Required for efficient processing of 16S rRNA. May interact with the 5'-terminal helix region of 16S rRNA. The protein is Ribosome-binding factor A of Wigglesworthia glossinidia brevipalpis.